The sequence spans 192 residues: Leucine-rich repeat-containing protein 51 (192 aa).

3 LRR repeats span residues 49-71, 80-101, and 103-124; these read SLTQSLWLNNNVLNDLRDFNQVA, NLAWIDLSFNDLTSIDPVLTTF, and NLSVLYLHGNSIQRLGEVNKLA. Positions 137 to 175 constitute an LRRCT domain; the sequence is NPMEEEKGYRQYVLCTLSRITTFDFAGVTKADRTTAEVW.

The protein resides in the cytoplasm. This chain is Leucine-rich repeat-containing protein 51, found in Pan troglodytes (Chimpanzee).